The following is a 178-amino-acid chain: Orotate phosphoribosyltransferase (178 aa).

5-phospho-alpha-D-ribose 1-diphosphate-binding positions include arginine 92, lysine 93, lysine 96, and 118 to 126 (EDVITTGSS). Orotate-binding residues include threonine 122 and arginine 150.

It belongs to the purine/pyrimidine phosphoribosyltransferase family. PyrE subfamily. Homodimer. The cofactor is Mg(2+).

It catalyses the reaction orotidine 5'-phosphate + diphosphate = orotate + 5-phospho-alpha-D-ribose 1-diphosphate. The protein operates within pyrimidine metabolism; UMP biosynthesis via de novo pathway; UMP from orotate: step 1/2. Catalyzes the transfer of a ribosyl phosphate group from 5-phosphoribose 1-diphosphate to orotate, leading to the formation of orotidine monophosphate (OMP). The chain is Orotate phosphoribosyltransferase from Archaeoglobus fulgidus (strain ATCC 49558 / DSM 4304 / JCM 9628 / NBRC 100126 / VC-16).